Reading from the N-terminus, the 481-residue chain is Sulfate adenylyltransferase subunit 1 (481 aa).

The region spanning 22–236 (KDLLRFITCG…LLDSIRLDAD (215 aa)) is the tr-type G domain. The tract at residues 31 to 38 (GSVDDGKS) is G1. GTP is bound at residue 31–38 (GSVDDGKS). The interval 89 to 93 (GITID) is G2. The interval 110–113 (DCPG) is G3. Residues 110 to 114 (DCPGH) and 165 to 168 (NKMD) each bind GTP. The G4 stretch occupies residues 165 to 168 (NKMD). A G5 region spans residues 202 to 204 (SAL).

This sequence belongs to the TRAFAC class translation factor GTPase superfamily. Classic translation factor GTPase family. CysN/NodQ subfamily. As to quaternary structure, heterodimer composed of CysD, the smaller subunit, and CysN.

The catalysed reaction is sulfate + ATP + H(+) = adenosine 5'-phosphosulfate + diphosphate. The protein operates within sulfur metabolism; hydrogen sulfide biosynthesis; sulfite from sulfate: step 1/3. In terms of biological role, with CysD forms the ATP sulfurylase (ATPS) that catalyzes the adenylation of sulfate producing adenosine 5'-phosphosulfate (APS) and diphosphate, the first enzymatic step in sulfur assimilation pathway. APS synthesis involves the formation of a high-energy phosphoric-sulfuric acid anhydride bond driven by GTP hydrolysis by CysN coupled to ATP hydrolysis by CysD. In Laribacter hongkongensis (strain HLHK9), this protein is Sulfate adenylyltransferase subunit 1.